An 81-amino-acid chain; its full sequence is Antimicrobial peptide D2 (81 aa).

The signal sequence occupies residues 1 to 31; sequence MAKTVLGIHVTFLTLLFAVILLNDVMYTPVE. Disulfide bonds link cysteine 34–cysteine 81, cysteine 45–cysteine 66, cysteine 51–cysteine 75, and cysteine 55–cysteine 77.

Its function is as follows. Antimicrobial peptide probably active against fungi like B.sorokiniana, F.oxysporum, F.graminearum, F.avenaceum, B.cinerea, P.beta, P.infestans and P.debaryanum. This is Antimicrobial peptide D2 from Stellaria media (Common chickweed).